The following is a 459-amino-acid chain: 5-hydroxytryptamine receptor 2C (459 aa).

A signal peptide spans 1-32 (MVNLGTAVRSLLVHLIGLLVWQFDISISPVAA). Residues 33-56 (IVTDTFNSSDGGRLFQFPDGVQNW) lie on the Extracellular side of the membrane. A helical membrane pass occupies residues 57-81 (PALSIVVIIIMTIGGNILVIMAVSM). Residues 82 to 87 (EKKLHN) are Cytoplasmic-facing. Residues 88 to 112 (ATNYFLMSLAIADMLVGLLVMPLSL) form a helical membrane-spanning segment. At 113–129 (LAILYDYVWPLPRYLCP) the chain is on the extracellular side. Cys-128 and Cys-208 form a disulfide bridge. The helical transmembrane segment at 130–152 (VWISLDVLFSTASIMHLCAISLD) threads the bilayer. Thr-140 contacts ergotamine. The short motif at 152–154 (DRY) is the DRY motif; important for ligand-induced conformation changes element. Topologically, residues 153–168 (RYVAIRNPIEHSRFNS) are cytoplasmic. The chain crosses the membrane as a helical span at residues 169-190 (RTKAIMKIAIVWAISIGVSVPI). Residues 191–214 (PVIGLRDESKVFVNNTTCVLNDPN) are Extracellular-facing. Residues Asn-204 and Asn-205 are each glycosylated (N-linked (GlcNAc...) asparagine). Leu-210 is a binding site for ergotamine. The helical transmembrane segment at 215 to 237 (FVLIGSFVAFFIPLTIMVITYFL) threads the bilayer. Residues 238 to 312 (TIYVLRRQTL…AINNEKKASK (75 aa)) are Cytoplasmic-facing. A disordered region spans residues 274-302 (DEEENAPNPNPDQKPRRKKKEKRPRGTMQ). The span at 288–298 (PRRKKKEKRPR) shows a compositional bias: basic residues. Residues 313 to 337 (VLGIVFFVFLIMWCPFFITNILSVL) form a helical membrane-spanning segment. An intrachain disulfide couples Cys-338 to Cys-342. Residues 338 to 348 (CGKACNQKLME) are Extracellular-facing. Residues 349 to 371 (KLLNVFVWIGYVCSGINPLVYTL) form a helical membrane-spanning segment. The NPxxY motif; important for ligand-induced conformation changes and signaling motif lies at 365-369 (NPLVY). The Cytoplasmic portion of the chain corresponds to 372-459 (FNKIYRRAFS…NVVSERISSV (88 aa)). The PDZ-binding signature appears at 457 to 459 (SSV).

It belongs to the G-protein coupled receptor 1 family. Interacts with MPDZ. Interacts with ARRB2. Interacts with MPP3; this interaction stabilizes the receptor at the plasma membrane and prevents the desensitization of the HTR2C receptor-mediated calcium response. In terms of tissue distribution, detected in brain cortex, hypothalamus, brainstem and arcuate nucleus. Detected in the paraventricular nucleus of the hypothalamus.

The protein resides in the cell membrane. In terms of biological role, G-protein coupled receptor for 5-hydroxytryptamine (serotonin). Also functions as a receptor for various drugs and psychoactive substances, including ergot alkaloid derivatives, 1-2,5,-dimethoxy-4-iodophenyl-2-aminopropane (DOI) and lysergic acid diethylamide (LSD). Ligand binding causes a conformation change that triggers signaling via guanine nucleotide-binding proteins (G proteins) and modulates the activity of downstream effectors. HTR2C is coupled to G(q)/G(11) G alpha proteins and activates phospholipase C-beta, releasing diacylglycerol (DAG) and inositol 1,4,5-trisphosphate (IP3) second messengers that modulate the activity of phosphatidylinositol 3-kinase and promote the release of Ca(2+) ions from intracellular stores, respectively. Beta-arrestin family members inhibit signaling via G proteins and mediate activation of alternative signaling pathways. Regulates neuronal activity via the activation of short transient receptor potential calcium channels in the brain, and thereby modulates the activation of pro-opiomelanocortin neurons and the release of CRH that then regulates the release of corticosterone. Plays a role in the regulation of appetite and eating behavior, responses to anxiogenic stimuli and stress. Plays a role in insulin sensitivity and glucose homeostasis. The sequence is that of 5-hydroxytryptamine receptor 2C from Mus musculus (Mouse).